The following is a 152-amino-acid chain: Ribosome maturation factor RimP (152 aa).

Belongs to the RimP family.

It is found in the cytoplasm. In terms of biological role, required for maturation of 30S ribosomal subunits. The polypeptide is Ribosome maturation factor RimP (Porphyromonas gingivalis (strain ATCC BAA-308 / W83)).